We begin with the raw amino-acid sequence, 110 residues long: Translation initiation factor 1A 3 (110 aa).

The interval 1-29 (MIRKRQSGSNKSVSSGNNQEVTRVRTPRK) is disordered. The segment covering 7 to 18 (SGSNKSVSSGNN) has biased composition (low complexity). One can recognise an S1-like domain in the interval 22–96 (TRVRTPRKDR…SKADVIWKYT (75 aa)).

It belongs to the eIF-1A family.

Functionally, seems to be required for maximal rate of protein biosynthesis. Enhances ribosome dissociation into subunits and stabilizes the binding of the initiator Met-tRNA(I) to 40 S ribosomal subunits. The sequence is that of Translation initiation factor 1A 3 (eIF1A3) from Methanosarcina acetivorans (strain ATCC 35395 / DSM 2834 / JCM 12185 / C2A).